The following is a 304-amino-acid chain: Fructose permease IIC component (304 aa).

The 304-residue stretch at 1–304 folds into the PTS EIIC type-2 domain; sequence IHSADPKDPT…GIIKKPVEEK (304 aa). The next 8 membrane-spanning stretches (helical) occupy residues 20–40, 62–82, 98–118, 140–160, 181–201, 214–234, 238–258, and 277–297; these read FIGSDNALKLIVAVLAGFIAM, NAGFLGGLIAGFLAGYVVILL, PVLIYPLLGIFITGVLMQFVI, NLVLMGIILGGMMAIDMGGPL, AAIMAGGMVPPLGIALATTFF, ITCYFMGAAFVTEGAIPFAAA, VIPAAVIGSAVAGGLTEFFRV, and LLYLLSIVIGAIVTAVILGII.

Its subcellular location is the cell membrane. Its function is as follows. The phosphoenolpyruvate-dependent sugar phosphotransferase system (PTS), a major carbohydrate active -transport system, catalyzes the phosphorylation of incoming sugar substrates concomitant with their translocation across the cell membrane. This system is involved in fructose transport. This Bacillus amyloliquefaciens (Bacillus velezensis) protein is Fructose permease IIC component (fruA).